A 247-amino-acid polypeptide reads, in one-letter code: 5-oxoprolinase subunit A (247 aa).

The protein belongs to the LamB/PxpA family. As to quaternary structure, forms a complex composed of PxpA, PxpB and PxpC.

The enzyme catalyses 5-oxo-L-proline + ATP + 2 H2O = L-glutamate + ADP + phosphate + H(+). Its function is as follows. Catalyzes the cleavage of 5-oxoproline to form L-glutamate coupled to the hydrolysis of ATP to ADP and inorganic phosphate. In Klebsiella pneumoniae subsp. pneumoniae (strain ATCC 700721 / MGH 78578), this protein is 5-oxoprolinase subunit A.